Consider the following 189-residue polypeptide: Probable nicotinate-nucleotide adenylyltransferase (189 aa).

The protein belongs to the NadD family.

The enzyme catalyses nicotinate beta-D-ribonucleotide + ATP + H(+) = deamido-NAD(+) + diphosphate. It functions in the pathway cofactor biosynthesis; NAD(+) biosynthesis; deamido-NAD(+) from nicotinate D-ribonucleotide: step 1/1. In terms of biological role, catalyzes the reversible adenylation of nicotinate mononucleotide (NaMN) to nicotinic acid adenine dinucleotide (NaAD). The sequence is that of Probable nicotinate-nucleotide adenylyltransferase from Staphylococcus aureus (strain USA300 / TCH1516).